Consider the following 316-residue polypeptide: Pantothenate kinase (316 aa).

An ATP-binding site is contributed by 95-102 (GSVAVGKS).

Belongs to the prokaryotic pantothenate kinase family.

It is found in the cytoplasm. The catalysed reaction is (R)-pantothenate + ATP = (R)-4'-phosphopantothenate + ADP + H(+). The protein operates within cofactor biosynthesis; coenzyme A biosynthesis; CoA from (R)-pantothenate: step 1/5. In Shewanella sp. (strain MR-7), this protein is Pantothenate kinase.